A 55-amino-acid polypeptide reads, in one-letter code: Cortexin domain containing 2 (55 aa).

Residues 16 to 36 (FAIAFVVLLFLFLIVMIFRCA) form a helical membrane-spanning segment.

The protein resides in the membrane. The protein is Cortexin domain containing 2 of Homo sapiens (Human).